A 179-amino-acid chain; its full sequence is 3-hydroxyanthranilate 3,4-dioxygenase (179 aa).

Position 47 (arginine 47) interacts with O2. Positions 51, 57, and 96 each coordinate Fe cation. Substrate is bound at residue glutamate 57. 2 residues coordinate substrate: arginine 100 and glutamate 110. Positions 125, 128, 162, and 165 each coordinate Fe cation.

Belongs to the 3-HAO family. The cofactor is Fe(2+).

The enzyme catalyses 3-hydroxyanthranilate + O2 = (2Z,4Z)-2-amino-3-carboxymuconate 6-semialdehyde. It functions in the pathway cofactor biosynthesis; NAD(+) biosynthesis; quinolinate from L-kynurenine: step 3/3. Functionally, catalyzes the oxidative ring opening of 3-hydroxyanthranilate to 2-amino-3-carboxymuconate semialdehyde, which spontaneously cyclizes to quinolinate. This is 3-hydroxyanthranilate 3,4-dioxygenase from Bacillus thuringiensis (strain Al Hakam).